The chain runs to 266 residues: Phosphatidate cytidylyltransferase (266 aa).

A run of 8 helical transmembrane segments spans residues 16–36, 52–72, 78–98, 101–121, 125–145, 164–184, 186–206, and 237–257; these read VVLIVVAGLILYADNLLLFWA, LFQVKASFSLYLILVLSWVAA, PVECALISAMVMASVIAYQKA, SEAILPFLYPGVGFFALFGVY, GAVAIIWLLVVVVASDVGAFF, LEGALIGVVLASVLGSFVGMG, LSGGFLMALLFSFLIALMAVF, and LDSMLFGALSLHVLLYFLEIW.

It belongs to the CDS family.

Its subcellular location is the cell inner membrane. It carries out the reaction a 1,2-diacyl-sn-glycero-3-phosphate + CTP + H(+) = a CDP-1,2-diacyl-sn-glycerol + diphosphate. The protein operates within phospholipid metabolism; CDP-diacylglycerol biosynthesis; CDP-diacylglycerol from sn-glycerol 3-phosphate: step 3/3. This is Phosphatidate cytidylyltransferase (cdsA) from Helicobacter pylori (strain J99 / ATCC 700824) (Campylobacter pylori J99).